Consider the following 685-residue polypeptide: T-box transcription factor TBX2 (685 aa).

The segment at residues 104-277 (LWDQFHKLGT…NNPFAKGFRD (174 aa)) is a DNA-binding region (T-box). Disordered regions lie at residues 270-433 (PFAK…CGSL) and 606-660 (NLLT…SINE). 4 stretches are compositionally biased toward basic and acidic residues: residues 296 to 308 (MYEE…RDGA), 340 to 361 (SNRE…EVRT), 378 to 403 (RLED…KDGG), and 410 to 428 (SLEK…KSDP). The span at 606-617 (NLLTTGLSASLN) shows a compositional bias: polar residues. Over residues 618 to 633 (PGSESSKPGSSRESSP) the composition is skewed to low complexity. Positions 652-676 (ASMKDSINELQNIQRLVSGLESQRE) form a coiled coil.

As to quaternary structure, binds DNA as a monomer.

Its subcellular location is the nucleus. In terms of biological role, transcription factor which acts as a transcriptional repressor. May also function as a transcriptional activator. Binds to the palindromic T site 5'-TTCACACCTAGGTGTGAA-3' DNA sequence, or a half-site, which are present in the regulatory region of several genes. The protein is T-box transcription factor TBX2 (tbx2) of Xenopus tropicalis (Western clawed frog).